Here is a 333-residue protein sequence, read N- to C-terminus: Succinylglutamate desuccinylase (333 aa).

Residues His-56, Glu-59, and His-149 each coordinate Zn(2+). Residue Glu-214 is part of the active site.

The protein belongs to the AspA/AstE family. Succinylglutamate desuccinylase subfamily. Zn(2+) serves as cofactor.

The catalysed reaction is N-succinyl-L-glutamate + H2O = L-glutamate + succinate. The protein operates within amino-acid degradation; L-arginine degradation via AST pathway; L-glutamate and succinate from L-arginine: step 5/5. Its function is as follows. Transforms N(2)-succinylglutamate into succinate and glutamate. The protein is Succinylglutamate desuccinylase of Chromobacterium violaceum (strain ATCC 12472 / DSM 30191 / JCM 1249 / CCUG 213 / NBRC 12614 / NCIMB 9131 / NCTC 9757 / MK).